A 316-amino-acid chain; its full sequence is Olfactory receptor 4N4 (316 aa).

Residues 1 to 25 (MKIANNTVVTEFILLGLTQSQDIQL) are Extracellular-facing. Asparagine 5 is a glycosylation site (N-linked (GlcNAc...) asparagine). Residues 26–49 (LVFVLILIFYLIILPGNFLIIFTI) traverse the membrane as a helical segment. Topologically, residues 50 to 57 (RSDPGLTA) are cytoplasmic. A helical membrane pass occupies residues 58 to 79 (PLYLFLGNLAFLDASYSFIVAP). The Extracellular portion of the chain corresponds to 80 to 100 (RMLVDFLSEKKVISYRGCITQ). Cysteine 97 and cysteine 189 form a disulfide bridge. The helical transmembrane segment at 101–120 (LFFLHFLGGGEGLLLVVMAF) threads the bilayer. The Cytoplasmic segment spans residues 121-139 (DRYIAICRPLHCSTVMNPR). The chain crosses the membrane as a helical span at residues 140-158 (ACYAMMLALWLGGFVHSII). The Extracellular segment spans residues 159–195 (QVVLILRLPFCGPNQLDNFFCDVRQVIKLACTDMFVV). The helical transmembrane segment at 196–219 (ELLMVFNSGLMTLLCFLGLLASYA) threads the bilayer. Over 220-235 (VILCHVRRAASEGKNK) the chain is Cytoplasmic. The helical transmembrane segment at 236 to 258 (AMSTCTTRVIIILLMFGPAIFIY) threads the bilayer. Over 259-269 (MCPFRALPADK) the chain is Extracellular. Residues 270–289 (MVSLFHTVIFPLMNPMIYTL) traverse the membrane as a helical segment. Topologically, residues 290–316 (RNQEVKTSMKRLLSRHVVCQVDFIIRN) are cytoplasmic.

The protein belongs to the G-protein coupled receptor 1 family.

Its subcellular location is the cell membrane. Functionally, odorant receptor. The polypeptide is Olfactory receptor 4N4 (OR4N4) (Homo sapiens (Human)).